An 84-amino-acid chain; its full sequence is Large ribosomal subunit protein bL31B (84 aa).

It belongs to the bacterial ribosomal protein bL31 family. Type B subfamily. Part of the 50S ribosomal subunit.

The protein is Large ribosomal subunit protein bL31B of Rhodococcus opacus (strain B4).